Consider the following 144-residue polypeptide: 3-hydroxyacyl-[acyl-carrier-protein] dehydratase FabZ (144 aa).

Histidine 51 is an active-site residue.

Belongs to the thioester dehydratase family. FabZ subfamily.

The protein localises to the cytoplasm. The catalysed reaction is a (3R)-hydroxyacyl-[ACP] = a (2E)-enoyl-[ACP] + H2O. Involved in unsaturated fatty acids biosynthesis. Catalyzes the dehydration of short chain beta-hydroxyacyl-ACPs and long chain saturated and unsaturated beta-hydroxyacyl-ACPs. This chain is 3-hydroxyacyl-[acyl-carrier-protein] dehydratase FabZ, found in Clostridium botulinum (strain Loch Maree / Type A3).